A 483-amino-acid chain; its full sequence is Ero1-like protein (483 aa).

Positions M1–G29 are cleaved as a signal peptide. 6 disulfides stabilise this stretch: C44–C57, C46–C55, C94–C402, C103–C108, C227–C251, and C405–C408. Positions 206, 208, and 219 each coordinate FAD. Residue N232 is glycosylated (N-linked (GlcNAc...) asparagine). FAD is bound by residues S262, H265, and R301. N395 is a glycosylation site (N-linked (GlcNAc...) asparagine).

Belongs to the EROs family. May function both as a monomer and a homodimer. The cofactor is FAD.

The protein localises to the endoplasmic reticulum membrane. Its function is as follows. Oxidoreductase involved in disulfide bond formation in the endoplasmic reticulum. Efficiently reoxidizes pdi-1, the enzyme catalyzing protein disulfide formation, in order to allow pdi-1 to sustain additional rounds of disulfide formation. Following pdi reoxidation, passes its electrons to molecular oxygen via FAD, leading to the production of reactive oxygen species (ROS) in the cell. This is Ero1-like protein (Ero1L) from Drosophila melanogaster (Fruit fly).